A 266-amino-acid polypeptide reads, in one-letter code: Chymotrypsin-like elastase family member 1 (266 aa).

Positions 1-16 (MLRFLVFASLVLCGHS) are cleaved as a signal peptide. The propeptide at 17 to 26 (TEDVPETDAR) is activation peptide. The Peptidase S1 domain occupies 27–264 (VVGGAEARRN…YISWMNNVIA (238 aa)). The cysteines at positions 56 and 72 are disulfide-linked. The active-site Charge relay system is His71. The Ca(2+) site is built by Glu85, Asn87, Gln90, and Glu95. Asn87 carries an N-linked (GlcNAc...) asparagine glycan. The Charge relay system role is filled by Asp119. Cystine bridges form between Cys153-Cys220, Cys184-Cys200, and Cys210-Cys240. Ser214 serves as the catalytic Charge relay system.

Belongs to the peptidase S1 family. Elastase subfamily. The cofactor is Ca(2+).

It localises to the secreted. It carries out the reaction Hydrolysis of proteins, including elastin. Preferential cleavage: Ala-|-Xaa.. Functionally, serine proteases that hydrolyze many proteins in addition to elastin. This is Chymotrypsin-like elastase family member 1 (Cela1) from Mus musculus (Mouse).